The chain runs to 245 residues: 1-(5-phosphoribosyl)-5-[(5-phosphoribosylamino)methylideneamino] imidazole-4-carboxamide isomerase (245 aa).

Residue D7 is the Proton acceptor of the active site. D129 serves as the catalytic Proton donor.

It belongs to the HisA/HisF family.

The protein resides in the cytoplasm. The catalysed reaction is 1-(5-phospho-beta-D-ribosyl)-5-[(5-phospho-beta-D-ribosylamino)methylideneamino]imidazole-4-carboxamide = 5-[(5-phospho-1-deoxy-D-ribulos-1-ylimino)methylamino]-1-(5-phospho-beta-D-ribosyl)imidazole-4-carboxamide. It functions in the pathway amino-acid biosynthesis; L-histidine biosynthesis; L-histidine from 5-phospho-alpha-D-ribose 1-diphosphate: step 4/9. In Salmonella agona (strain SL483), this protein is 1-(5-phosphoribosyl)-5-[(5-phosphoribosylamino)methylideneamino] imidazole-4-carboxamide isomerase.